A 386-amino-acid polypeptide reads, in one-letter code: MVVAMDQRTNVNGDPGAGDRKKEERFDPSAQPPFKIGDIRAAIPKHCWVKSPLRSMSYVVRDIIAVAALAIAAVYVDSWFLWPLYWAAQGTLFWAIFVLGHDCGHGSFSDIPLLNSVVGHILHSFILVPYHGWRISHRTHHQNHGHVENDESWVPLPERVYKKLPHSTRMLRYTVPLPMLAYPLYLCYRSPGKEGSHFNPYSSLFAPSERKLIATSTTCWSIMFVSLIALSFVFGPLAVLKVYGVPYIIFVMWLDAVTYLHHHGHDEKLPWYRGKEWSYLRGGLTTIDRDYGIFNNIHHDIGTHVIHHLFPQIPHYHLVDATKAAKHVLGRYYREPKTSGAIPIHLVESLVASIKKDHYVSDTGDIVFYETDPDLYVYASDKSKIN.

The tract at residues 1 to 30 (MVVAMDQRTNVNGDPGAGDRKKEERFDPSA) is disordered. Over residues 17–27 (AGDRKKEERFD) the composition is skewed to basic and acidic residues. A helical membrane pass occupies residues 63-83 (IIAVAALAIAAVYVDSWFLWP). The Histidine box-1 signature appears at 101–105 (HDCGH). Residues 137-141 (HRTHH) carry the Histidine box-2 motif. 2 consecutive transmembrane segments (helical) span residues 220-240 (WSIM…LAVL) and 242-262 (VYGV…YLHH). The Histidine box-3 signature appears at 304 to 308 (HVIHH).

This sequence belongs to the fatty acid desaturase type 1 family. Abundant in leaves and seedlings. Barely detectable in root tissue.

It is found in the endoplasmic reticulum membrane. It catalyses the reaction a (9Z,12Z)-octadecadienoyl-containing glycerolipid + 2 Fe(II)-[cytochrome b5] + O2 + 2 H(+) = (9Z,12Z,15Z)-octadecatrienoyl-containing glycerolipid + 2 Fe(III)-[cytochrome b5] + 2 H2O. It participates in lipid metabolism; polyunsaturated fatty acid biosynthesis. In terms of biological role, microsomal (ER) omega-3 fatty acid desaturase introduces the third double bond in the biosynthesis of 18:3 fatty acids, important constituents of plant membranes. It is thought to use cytochrome b5 as an electron donor and to act on fatty acids esterified to phosphatidylcholine and, possibly, other phospholipids. In Arabidopsis thaliana (Mouse-ear cress), this protein is Acyl-lipid omega-3 desaturase (cytochrome b5), endoplasmic reticulum.